Reading from the N-terminus, the 343-residue chain is Endoplasmic reticulum-resident calcium binding protein (343 aa).

The N-terminal stretch at 1-26 (MMKINLYKLLCFICVIFLLHKNVVRS) is a signal peptide. 5 EF-hand domains span residues 59-94 (GAKE…LKNE), 95-130 (IFLK…NLDA), 135-170 (KHSE…MKDE), 172-207 (LKEL…ESSG), and 210-245 (KDDE…PAHE). The Ca(2+) site is built by aspartate 72, asparagine 74, aspartate 76, glutamate 78, glutamate 83, aspartate 108, aspartate 110, aspartate 112, glutamate 119, aspartate 148, aspartate 150, aspartate 152, lysine 154, glutamate 159, aspartate 185, asparagine 187, aspartate 189, lysine 191, glutamate 196, aspartate 223, asparagine 225, aspartate 227, and glutamate 234. Positions 313–331 (EDDDMDADNTEDDKDEADD) are enriched in acidic residues. Residues 313–343 (EDDDMDADNTEDDKDEADDASQQKSPAIDEL) are disordered.

Belongs to the CREC family.

It is found in the endoplasmic reticulum. Functionally, calcium-binding protein. Required for schizont to ring transition. Required for the breakdown of the parasitophorous vacuole membrane during egress. Required for the proteolytic maturation of apical membrane antigen 1 (AMA-1) during egress. Required for the proteolytic maturation of subtilisin-like protease 1 (SUB1) during egress. Required for the proteolytic maturation of plasmepsin X (PMX) during egress. The polypeptide is Endoplasmic reticulum-resident calcium binding protein (Plasmodium falciparum (isolate 3D7)).